A 206-amino-acid chain; its full sequence is Small ribosomal subunit protein uS4 (206 aa).

An S4 RNA-binding domain is found at 98-164 (MRLDNVVYRL…EKFKTFIENP (67 aa)).

This sequence belongs to the universal ribosomal protein uS4 family. Part of the 30S ribosomal subunit. Contacts protein S5. The interaction surface between S4 and S5 is involved in control of translational fidelity.

Functionally, one of the primary rRNA binding proteins, it binds directly to 16S rRNA where it nucleates assembly of the body of the 30S subunit. Its function is as follows. With S5 and S12 plays an important role in translational accuracy. The protein is Small ribosomal subunit protein uS4 of Clostridium tetani (strain Massachusetts / E88).